The following is a 186-amino-acid chain: Acetyltransferase PA5475 (186 aa).

An N-acetyltransferase domain is found at 31–186; it reads VLIRPLREED…STQVIHRLAL (156 aa). CoA contacts are provided by residues 117 to 119, G125, N156, and 161 to 163; these read VTI and DLC.

Catalyzes the transfer of an acetyl group from acetyl coenzyme A (AcCoA) to an acceptor substrate and releases both CoA and the acetylated product. It prefers the antibiotic chloramphenicol. In Pseudomonas aeruginosa (strain ATCC 15692 / DSM 22644 / CIP 104116 / JCM 14847 / LMG 12228 / 1C / PRS 101 / PAO1), this protein is Acetyltransferase PA5475.